The chain runs to 157 residues: DNA-binding protein MNB1B (157 aa).

Disordered stretches follow at residues 1–45 (MKGA…KRAP), 59–87 (FKEK…SESD), and 109–157 (YNKG…DDDE). 2 stretches are compositionally biased toward basic and acidic residues: residues 10-27 (AKAD…EKPA) and 76-87 (AGDRWKSLSESD). Positions 41–110 (PKRAPSAFFV…EYNKAIAAYN (70 aa)) form a DNA-binding region, HMG box. Composition is skewed to acidic residues over residues 124-133 (EEEEEDEEES) and 141-157 (NDED…DDDE). Ser-149 carries the phosphoserine; by CK2 modification.

As to expression, expressed in all tissues examined.

The protein resides in the nucleus. Its function is as follows. Recognizes an AAGG motif at the MNF1-binding site. In Zea mays (Maize), this protein is DNA-binding protein MNB1B (MNB1B).